The following is a 301-amino-acid chain: ADP,ATP carrier protein 1 (301 aa).

Solcar repeat units lie at residues Tyr-8–Val-100, Arg-113–Met-203, and Thr-210–Leu-299. Helical transmembrane passes span Phe-10–Gln-39, Leu-77–Phe-101, Trp-112–Phe-132, Val-181–Lys-201, and Phe-213–Phe-233. Residues Arg-82 and Lys-94 each contribute to the ADP site. Arg-237 provides a ligand contact to ADP. The segment at Arg-237–Met-242 is important for transport activity. A Nucleotide carrier signature motif motif is present at residues Arg-237–Met-242. Residues Ala-276 to Tyr-293 traverse the membrane as a helical segment.

The protein belongs to the mitochondrial carrier (TC 2.A.29) family. As to quaternary structure, monomer.

It localises to the mitochondrion inner membrane. The catalysed reaction is ADP(in) + ATP(out) = ADP(out) + ATP(in). Its activity is regulated as follows. The matrix-open state (m-state) is inhibited by the membrane-permeable bongkrekic acid (BKA). The cytoplasmic-open state (c-state) is inhibited by the membrane-impermeable toxic inhibitor carboxyatractyloside (CATR). Its function is as follows. ADP:ATP antiporter that mediates import of ADP into the mitochondrial matrix for ATP synthesis, and export of ATP out to fuel the cell. Cycles between the cytoplasmic-open state (c-state) and the matrix-open state (m-state): operates by the alternating access mechanism with a single substrate-binding site intermittently exposed to either the cytosolic (c-state) or matrix (m-state) side of the inner mitochondrial membrane. This is ADP,ATP carrier protein 1 from Anopheles gambiae (African malaria mosquito).